The sequence spans 448 residues: Serine/threonine-protein phosphatase 2A regulatory subunit B'' subunit gamma (448 aa).

EF-hand domains follow at residues 268–303 and 336–371; these read PSAL…TLTC and KEPA…IQEQ. The Ca(2+) site is built by D281, D283, N285, M287, and E292.

Its subcellular location is the nucleus. It is found in the cytoplasm. Possible role in the regulation of cell death. The polypeptide is Serine/threonine-protein phosphatase 2A regulatory subunit B'' subunit gamma (ppp2r3c) (Xenopus tropicalis (Western clawed frog)).